The sequence spans 374 residues: Putative glutamate--cysteine ligase 2 (374 aa).

Belongs to the glutamate--cysteine ligase type 2 family. YbdK subfamily.

It carries out the reaction L-cysteine + L-glutamate + ATP = gamma-L-glutamyl-L-cysteine + ADP + phosphate + H(+). In terms of biological role, ATP-dependent carboxylate-amine ligase which exhibits weak glutamate--cysteine ligase activity. In Acidovorax sp. (strain JS42), this protein is Putative glutamate--cysteine ligase 2.